A 465-amino-acid polypeptide reads, in one-letter code: MAADDYVVADMSLAAWGRKEIEIAETEMPGLMACREEFGEAKPLKGARITGSLHMTIQTAVLIETLKSLGAEVRWASCNIFSTQDHAAAAIAETGTPVFAVKGETLEEYWTYTDRIFQWPDGQPSNMILDDGGDATMYILLGARAEAGEDVLSNPDGEEEEILFQQIKKRMAETPGFFTRQRAAIRGVTEETTTGVNRLYQLQKKGLLPFPAINVNDSVTKSKFDNKYGCKESLVDGIRRATDVMMAGKVAIVCGYGDVGKGSAQSLAGAGARVKVTEADPICALQAAMDGFEVVTLDEAIATADIIITATGNKDVVSLDHMRKMKDMVILGNIGHFDNEIQVAALRNFKWVNIKPQVDLIEFPDGKRIILLSEGRLLNLGNATGHPSFVMSASFTNQVLAQIELWTRGSQYENKVYVLPKHLDEKVARLHLAKLGANLTKLSPEQAAYIGVTPEGPFKPDHYRY.

Thr-56, Asp-131, and Glu-191 together coordinate substrate. Position 192-194 (Thr-192–Thr-194) interacts with NAD(+). Substrate-binding residues include Lys-221 and Asp-225. NAD(+) is bound by residues Asn-226, Gly-255–Gly-260, Glu-278, Asn-313, Ile-334–His-336, and Asn-379.

The protein belongs to the adenosylhomocysteinase family. NAD(+) serves as cofactor.

The protein resides in the cytoplasm. The catalysed reaction is S-adenosyl-L-homocysteine + H2O = L-homocysteine + adenosine. It functions in the pathway amino-acid biosynthesis; L-homocysteine biosynthesis; L-homocysteine from S-adenosyl-L-homocysteine: step 1/1. In terms of biological role, may play a key role in the regulation of the intracellular concentration of adenosylhomocysteine. The protein is Adenosylhomocysteinase of Chelativorans sp. (strain BNC1).